The chain runs to 54 residues: uncharacterized protein (54 aa).

This is an uncharacterized protein from Saccharomyces cerevisiae (strain ATCC 204508 / S288c) (Baker's yeast).